A 188-amino-acid polypeptide reads, in one-letter code: 2-amino-4-hydroxy-6-hydroxymethyldihydropteridine pyrophosphokinase (188 aa).

It belongs to the HPPK family.

The enzyme catalyses 6-hydroxymethyl-7,8-dihydropterin + ATP = (7,8-dihydropterin-6-yl)methyl diphosphate + AMP + H(+). The protein operates within cofactor biosynthesis; tetrahydrofolate biosynthesis; 2-amino-4-hydroxy-6-hydroxymethyl-7,8-dihydropteridine diphosphate from 7,8-dihydroneopterin triphosphate: step 4/4. Its function is as follows. Catalyzes the transfer of pyrophosphate from adenosine triphosphate (ATP) to 6-hydroxymethyl-7,8-dihydropterin, an enzymatic step in folate biosynthesis pathway. In Mycobacterium tuberculosis (strain ATCC 25618 / H37Rv), this protein is 2-amino-4-hydroxy-6-hydroxymethyldihydropteridine pyrophosphokinase (folK).